The primary structure comprises 309 residues: MSQPPLLDHATQTMANGSKSFATAAKLFDPATRRSVLMLYTWCRHCDDVIDDQTHGFASEAAAEEEATQRLARLRTLTLAAFEGAEMQDPAFAAFQEVALTHGITPRMALDHLDGFAMDVAQTRYVTFEDTLRYCYHVAGVVGLMMARVMGVRDERVLDRACDLGLAFQLTNIARDIIDDAAIDRCYLPAEWLQDAGLTPENYAARENRAALARVAERLIDAAEPYYISSQAGLHDLPPRCAWAIATARSVYREIGIKVKAAGGSAWDRRQHTSKGEKIAMLMAAPGQVIRAKTTRVTPRPAGLWQRPV.

It belongs to the phytoene/squalene synthase family. ATP is required as a cofactor. Mn(2+) serves as cofactor. Requires Mg(2+) as cofactor.

Its pathway is carotenoid biosynthesis; phytoene biosynthesis. Functionally, involved in the biosynthesis of carotenoids. Catalyzes the condensation of two molecules of geranylgeranyl diphosphate (GGPP) to give prephytoene diphosphate (PPPP) and the subsequent rearrangement of the cyclopropylcarbinyl intermediate to yield phytoene. The protein is Phytoene synthase (crtB) of Pseudescherichia vulneris (Escherichia vulneris).